A 137-amino-acid polypeptide reads, in one-letter code: 2-iminobutanoate/2-iminopropanoate deaminase (137 aa).

Serine 2 carries the N-acetylserine modification. Residues lysine 13 and lysine 67 each carry the N6-succinyllysine modification. Threonine 74 bears the Phosphothreonine mark. At serine 136 the chain carries Phosphoserine.

The protein belongs to the RutC family. Homotrimer. Interacts with YTHDF2.

It is found in the cytoplasm. It localises to the nucleus. The protein localises to the peroxisome. Its subcellular location is the mitochondrion. The enzyme catalyses 2-iminobutanoate + H2O = 2-oxobutanoate + NH4(+). The catalysed reaction is 2-iminopropanoate + H2O = pyruvate + NH4(+). In terms of biological role, catalyzes the hydrolytic deamination of enamine/imine intermediates that form during the course of normal metabolism. May facilitate the release of ammonia from these potentially toxic reactive metabolites, reducing their impact on cellular components. It may act on enamine/imine intermediates formed by several types of pyridoxal-5'-phosphate-dependent dehydratases including L-threonine dehydratase. Its function is as follows. Also promotes endoribonucleolytic cleavage of some transcripts by promoting recruitment of the ribonuclease P/MRP complex. Acts by bridging YTHDF2 and the ribonuclease P/MRP complex. RIDA/HRSP12 binds to N6-methyladenosine (m6A)-containing mRNAs containing a 5'-GGUUC-3' motif: cooperative binding of RIDA/HRSP12 and YTHDF2 to such transcripts lead to recruitment of the ribonuclease P/MRP complex and subsequent endoribonucleolytic cleavage. This Bos taurus (Bovine) protein is 2-iminobutanoate/2-iminopropanoate deaminase.